Reading from the N-terminus, the 395-residue chain is S-adenosylmethionine synthase (395 aa).

H15 is a binding site for ATP. D17 provides a ligand contact to Mg(2+). E43 contributes to the K(+) binding site. E56 and Q99 together coordinate L-methionine. Positions 99 to 109 are flexible loop; sequence QSADIALGVDE. ATP is bound by residues 174-176, 240-241, D249, 255-256, A272, and K276; these read DGK, RF, and RK. Residue D249 participates in L-methionine binding. Position 280 (K280) interacts with L-methionine.

Belongs to the AdoMet synthase family. Homotetramer; dimer of dimers. Mg(2+) is required as a cofactor. K(+) serves as cofactor.

The protein localises to the cytoplasm. The catalysed reaction is L-methionine + ATP + H2O = S-adenosyl-L-methionine + phosphate + diphosphate. It participates in amino-acid biosynthesis; S-adenosyl-L-methionine biosynthesis; S-adenosyl-L-methionine from L-methionine: step 1/1. Its function is as follows. Catalyzes the formation of S-adenosylmethionine (AdoMet) from methionine and ATP. The overall synthetic reaction is composed of two sequential steps, AdoMet formation and the subsequent tripolyphosphate hydrolysis which occurs prior to release of AdoMet from the enzyme. This Alkaliphilus oremlandii (strain OhILAs) (Clostridium oremlandii (strain OhILAs)) protein is S-adenosylmethionine synthase.